The primary structure comprises 149 residues: UPF0260 protein RCAP_rcc02083 (149 aa).

This sequence belongs to the UPF0260 family.

In Rhodobacter capsulatus (strain ATCC BAA-309 / NBRC 16581 / SB1003), this protein is UPF0260 protein RCAP_rcc02083.